The primary structure comprises 73 residues: Large ribosomal subunit protein bL31 (73 aa).

Positions 16, 18, 38, and 41 each coordinate Zn(2+).

Belongs to the bacterial ribosomal protein bL31 family. Type A subfamily. In terms of assembly, part of the 50S ribosomal subunit. It depends on Zn(2+) as a cofactor.

Functionally, binds the 23S rRNA. This is Large ribosomal subunit protein bL31 from Vibrio vulnificus (strain YJ016).